The sequence spans 170 residues: Translationally-controlled tumor protein homolog (170 aa).

Residues 1-170 (MLIYNDILNG…WKHGLKETKV (170 aa)) form the TCTP domain.

Belongs to the TCTP family.

The protein resides in the cytoplasm. It localises to the cytoskeleton. Involved in protein synthesis. Involved in microtubule stabilization. The chain is Translationally-controlled tumor protein homolog from Gibberella zeae (strain ATCC MYA-4620 / CBS 123657 / FGSC 9075 / NRRL 31084 / PH-1) (Wheat head blight fungus).